Consider the following 199-residue polypeptide: Fe/S biogenesis protein NfuA (199 aa).

Cysteine 156 and cysteine 159 together coordinate [4Fe-4S] cluster.

Belongs to the NfuA family. In terms of assembly, homodimer. It depends on [4Fe-4S] cluster as a cofactor.

Involved in iron-sulfur cluster biogenesis. Binds a 4Fe-4S cluster, can transfer this cluster to apoproteins, and thereby intervenes in the maturation of Fe/S proteins. Could also act as a scaffold/chaperone for damaged Fe/S proteins. The chain is Fe/S biogenesis protein NfuA from Actinobacillus pleuropneumoniae serotype 5b (strain L20).